We begin with the raw amino-acid sequence, 331 residues long: Ketol-acid reductoisomerase (NADP(+)) (331 aa).

One can recognise a KARI N-terminal Rossmann domain in the interval 2 to 182 (AQLFYDSDAD…GGTRAGILET (181 aa)). Residues 25–28 (YGSQ), Ser51, Ser53, and 83–86 (DEFQ) contribute to the NADP(+) site. The active site involves His108. Residue Gly134 coordinates NADP(+). One can recognise a KARI C-terminal knotted domain in the interval 183 to 328 (NFKEETETDL…KGLRSMFSWL (146 aa)). Residues Asp191, Glu195, Glu227, and Glu231 each contribute to the Mg(2+) site. Ser252 provides a ligand contact to substrate.

It belongs to the ketol-acid reductoisomerase family. It depends on Mg(2+) as a cofactor.

The enzyme catalyses (2R)-2,3-dihydroxy-3-methylbutanoate + NADP(+) = (2S)-2-acetolactate + NADPH + H(+). It carries out the reaction (2R,3R)-2,3-dihydroxy-3-methylpentanoate + NADP(+) = (S)-2-ethyl-2-hydroxy-3-oxobutanoate + NADPH + H(+). Its pathway is amino-acid biosynthesis; L-isoleucine biosynthesis; L-isoleucine from 2-oxobutanoate: step 2/4. It participates in amino-acid biosynthesis; L-valine biosynthesis; L-valine from pyruvate: step 2/4. Involved in the biosynthesis of branched-chain amino acids (BCAA). Catalyzes an alkyl-migration followed by a ketol-acid reduction of (S)-2-acetolactate (S2AL) to yield (R)-2,3-dihydroxy-isovalerate. In the isomerase reaction, S2AL is rearranged via a Mg-dependent methyl migration to produce 3-hydroxy-3-methyl-2-ketobutyrate (HMKB). In the reductase reaction, this 2-ketoacid undergoes a metal-dependent reduction by NADPH to yield (R)-2,3-dihydroxy-isovalerate. The sequence is that of Ketol-acid reductoisomerase (NADP(+)) from Synechococcus sp. (strain CC9605).